The following is a 142-amino-acid chain: Putative pterin-4-alpha-carbinolamine dehydratase (142 aa).

The protein belongs to the pterin-4-alpha-carbinolamine dehydratase family.

It carries out the reaction (4aS,6R)-4a-hydroxy-L-erythro-5,6,7,8-tetrahydrobiopterin = (6R)-L-erythro-6,7-dihydrobiopterin + H2O. In Caenorhabditis elegans, this protein is Putative pterin-4-alpha-carbinolamine dehydratase (pcbd-1).